Reading from the N-terminus, the 399-residue chain is Serine/threonine transporter SstT (399 aa).

9 consecutive transmembrane segments (helical) span residues 8-28 (LSLV…AFLF), 37-57 (IFGE…VFVL), 77-97 (ILFL…IADL), 134-154 (PVVA…IILG), 178-198 (VIHL…AVTF), 212-232 (LLLV…PIMV), 284-304 (VIIP…ITVL), 312-332 (LGIS…SISA), and 348-370 (VACS…GMVI).

It belongs to the dicarboxylate/amino acid:cation symporter (DAACS) (TC 2.A.23) family.

It is found in the cell inner membrane. It catalyses the reaction L-serine(in) + Na(+)(in) = L-serine(out) + Na(+)(out). The catalysed reaction is L-threonine(in) + Na(+)(in) = L-threonine(out) + Na(+)(out). Involved in the import of serine and threonine into the cell, with the concomitant import of sodium (symport system). The chain is Serine/threonine transporter SstT from Acinetobacter baylyi (strain ATCC 33305 / BD413 / ADP1).